An 81-amino-acid chain; its full sequence is Exodeoxyribonuclease 7 small subunit (81 aa).

It belongs to the XseB family. As to quaternary structure, heterooligomer composed of large and small subunits.

The protein resides in the cytoplasm. It carries out the reaction Exonucleolytic cleavage in either 5'- to 3'- or 3'- to 5'-direction to yield nucleoside 5'-phosphates.. Its function is as follows. Bidirectionally degrades single-stranded DNA into large acid-insoluble oligonucleotides, which are then degraded further into small acid-soluble oligonucleotides. This is Exodeoxyribonuclease 7 small subunit from Paramagnetospirillum magneticum (strain ATCC 700264 / AMB-1) (Magnetospirillum magneticum).